A 430-amino-acid chain; its full sequence is Adenylosuccinate synthetase (430 aa).

GTP contacts are provided by residues 13–19 and 41–43; these read GDEGKGK and GHT. Asp-14 serves as the catalytic Proton acceptor. Mg(2+) is bound by residues Asp-14 and Gly-41. Residues 14-17, 39-42, Thr-130, Arg-144, Gln-225, Thr-240, and Arg-304 contribute to the IMP site; these read DEGK and NAGH. His-42 acts as the Proton donor in catalysis. 300–306 provides a ligand contact to substrate; the sequence is STTGRKR. Residues Arg-306, 332–334, and 414–416 contribute to the GTP site; these read KLD and STG.

It belongs to the adenylosuccinate synthetase family. Homodimer. Mg(2+) serves as cofactor.

The protein resides in the cytoplasm. It carries out the reaction IMP + L-aspartate + GTP = N(6)-(1,2-dicarboxyethyl)-AMP + GDP + phosphate + 2 H(+). The protein operates within purine metabolism; AMP biosynthesis via de novo pathway; AMP from IMP: step 1/2. In terms of biological role, plays an important role in the de novo pathway of purine nucleotide biosynthesis. Catalyzes the first committed step in the biosynthesis of AMP from IMP. The sequence is that of Adenylosuccinate synthetase from Buchnera aphidicola subsp. Schizaphis graminum (strain Sg).